The primary structure comprises 553 residues: Transcriptional regulator HilA (553 aa).

Positions 11–107 (NKKFVFDDFI…LYGQGYRFNR (97 aa)) form a DNA-binding region, ompR/PhoB-type. A 4-aspartylphosphate modification is found at D62. One copy of the TPR repeat lies at 372–405 (ADIKYYYGWNLFMAGQLEEALQTINECLKLDPTR).

Functionally, the main transcriptional regulator of the Salmonella pathogenicity island 1 (SPI1) gene expression. Activates the expression of invasion genes by a direct action at their promoters and also indirectly by increasing the level of invF. Also binds upstream of prgH and directly activates the expression of prgHIJK operon. The chain is Transcriptional regulator HilA (hilA) from Salmonella typhi.